Consider the following 374-residue polypeptide: Anhydro-N-acetylmuramic acid kinase (374 aa).

Gly15–Asp22 provides a ligand contact to ATP.

The protein belongs to the anhydro-N-acetylmuramic acid kinase family.

The enzyme catalyses 1,6-anhydro-N-acetyl-beta-muramate + ATP + H2O = N-acetyl-D-muramate 6-phosphate + ADP + H(+). Its pathway is amino-sugar metabolism; 1,6-anhydro-N-acetylmuramate degradation. It participates in cell wall biogenesis; peptidoglycan recycling. Catalyzes the specific phosphorylation of 1,6-anhydro-N-acetylmuramic acid (anhMurNAc) with the simultaneous cleavage of the 1,6-anhydro ring, generating MurNAc-6-P. Is required for the utilization of anhMurNAc either imported from the medium or derived from its own cell wall murein, and thus plays a role in cell wall recycling. The sequence is that of Anhydro-N-acetylmuramic acid kinase from Xanthomonas axonopodis pv. citri (strain 306).